The chain runs to 517 residues: Crotonobetaine/carnitine--CoA ligase (517 aa).

The protein belongs to the ATP-dependent AMP-binding enzyme family.

It catalyses the reaction 4-(trimethylamino)butanoate + ATP + CoA = 4-(trimethylamino)butanoyl-CoA + AMP + diphosphate. The catalysed reaction is crotonobetaine + ATP + CoA = crotonobetainyl-CoA + AMP + diphosphate. It carries out the reaction (R)-carnitine + ATP + CoA = (R)-carnitinyl-CoA + AMP + diphosphate. Its pathway is amine and polyamine metabolism; carnitine metabolism. Its function is as follows. Catalyzes the transfer of CoA to carnitine, generating the initial carnitinyl-CoA needed for the CaiB reaction cycle. Also has activity toward crotonobetaine and gamma-butyrobetaine. This Escherichia coli O139:H28 (strain E24377A / ETEC) protein is Crotonobetaine/carnitine--CoA ligase.